The sequence spans 2159 residues: Calpain-type cysteine protease DEK1 (2159 aa).

A signal peptide spans 1–33 (MEGEGHHGVVLACSICGFLFAVLSPFSFWVLWA). Residues 34 to 70 (VNWRPWRLYSWIYARKWPTYVQGPQLSTLCSLLTLCA) are Extracellular-facing. A helical transmembrane segment spans residues 71–91 (WLVVISPIAVLLVWGSVLIAL). The Cytoplasmic portion of the chain corresponds to 92–95 (MERN). The helical transmembrane segment at 96-116 (IIGLAVIMAGVALLLSFYSIM) threads the bilayer. The Extracellular segment spans residues 117–127 (LWWRTQWQSSE). Residues 128–148 (AVAYLLLLAVCLLCAYDFCAI) traverse the membrane as a helical segment. The Cytoplasmic segment spans residues 149-164 (YVTAGASASELNSPSG). A helical transmembrane segment spans residues 165–185 (FFFGVSVISLAINMLFICKIL). Over 186–236 (FNVSGFDVDEYVRRSYKFAYSDCVEVAPVSCSPEPPDPSELYMTKSSRVKH) the chain is Extracellular. Residues 237–257 (LGLLYISSLLVLVGYSILYGL) form a helical membrane-spanning segment. At 258–264 (TSKEARW) the chain is on the cytoplasmic side. The chain crosses the membrane as a helical span at residues 265-285 (LGALTSVAVVILDWNLGLCSF). The Extracellular segment spans residues 286 to 294 (RFELLKSRM). A helical membrane pass occupies residues 295-315 (IVLFVAGTSRAFLVSFGVHYW). The Cytoplasmic segment spans residues 316-320 (YLGHC). The helical transmembrane segment at 321 to 341 (ISYAFVASVLLSAAVSSWLSI) threads the bilayer. Over 342-623 (SNPSVARIDA…LIFHHLAGSP (282 aa)) the chain is Extracellular. The disordered stretch occupies residues 365 to 409 (RKGQNSSSNSSEGCGSSVKRSSGSVEAGQNGNAMDSMYRSNSQSD). Residues 369-381 (NSSSNSSEGCGSS) show a composition bias toward low complexity. Polar residues predominate over residues 382-409 (VKRSSGSVEAGQNGNAMDSMYRSNSQSD). The helical transmembrane segment at 624 to 644 (IRAFIVFTVMFIIETATVAIY) threads the bilayer. Residues 645–660 (RPETIKVINATHEQFE) lie on the Cytoplasmic side of the membrane. Residues 661–681 (FGFSILLLSPVVCSIMAFIWS) traverse the membrane as a helical segment. The Extracellular portion of the chain corresponds to 682–694 (LRAEEMLMTSKPQ). Residues 695–715 (KYGFIAWLLSTCVGLFLSFLS) traverse the membrane as a helical segment. Topologically, residues 716–719 (KSSV) are cytoplasmic. Residues 720–740 (ILGLSLTVPLMVACLSFAVPI) form a helical membrane-spanning segment. Over 741–770 (WIRNGYSFWIPGREFANRENVSQAPGEKER) the chain is Extracellular. The helical transmembrane segment at 771–791 (ALFVITIAVFTASIIGLGAIV) threads the bilayer. The Cytoplasmic segment spans residues 792–822 (SAKPLDALGYKGWDADKNSSYSPYATSMYLG). Residues 823-843 (WALSSTIAVITTGLIPIVAWF) traverse the membrane as a helical segment. Over 844–853 (ATYRFSPSSA) the chain is Extracellular. The helical transmembrane segment at 854-874 (ICVGLFATVLVSFCGASYWGV) threads the bilayer. Over 875-887 (VNSREDGVPLKAD) the chain is Cytoplasmic. The helical transmembrane segment at 888-908 (FLAALLPLLCIPAFFSLFTGL) threads the bilayer. At 909-921 (YKWKDDDWKISRG) the chain is on the extracellular side. A helical transmembrane segment spans residues 922-942 (VYLFVGMGMLLLFGAVAAVIV). The Cytoplasmic portion of the chain corresponds to 943-946 (TIRP). A helical transmembrane segment spans residues 947 to 967 (WTVGVACLVAILFLVFVIGVI). Residues 968–981 (HYWTSNNFYLTRTQ) lie on the Extracellular side of the membrane. Residues 982–1002 (MLLVCSIAFLLALAAFLMGLF) form a helical membrane-spanning segment. At 1003 to 1016 (HGKPFVGASIGYFS) the chain is on the cytoplasmic side. Residues 1017-1037 (FIFLLTGRALTVLLSPPIVVY) traverse the membrane as a helical segment. Topologically, residues 1038–1060 (SPRVLPVYVYDAHADSAKNVSYA) are extracellular. The chain crosses the membrane as a helical span at residues 1061 to 1081 (FLILYGIALATEVWGVIASLI). Over 1082 to 2159 (MNPPFVGAGV…SKASIRLEAV (1078 aa)) the chain is Cytoplasmic. Phosphoserine occurs at positions 1371 and 1376. The Calpain catalytic 1 domain occupies 1417–1609 (TGRHCGELDL…MSPAEYGFFD (193 aa)). At Ser1665 the chain carries Phosphoserine. One can recognise a Calpain catalytic 2 domain in the interval 1703–2005 (NFTDQEFPPE…FRSIYVCRVY (303 aa)). Active-site residues include Cys1769, His1927, and Asn1947.

This sequence belongs to the peptidase C2 family. Post-translationally, autocatalytic proteolytic cleavage leading to the production of mainly cytoplasmic localized subproducts of about 85 and 120 kDa. Expressed in most tissues at low levels ranging from 30 to 55 ppm. Present in all endosperm cells at transcript level, but confined to aleurones at protein level.

The protein resides in the endoplasmic reticulum membrane. It is found in the cytoplasm. The protein localises to the cell membrane. It localises to the endosome membrane. Functionally, essential protease involved in epiderm development. Required for aleurone cell development in the endosperm probably by maintaining and restricting the aleurone and embryonic epidermal L1 cell-layer fates as well as meristems organization. Involved in the maintenance of adaxial/abaxial axis information in developing leaves, probably by regulating cell proliferation and expansion. Does not need calcium ions to be active. This is Calpain-type cysteine protease DEK1 (DEK1) from Zea mays (Maize).